A 171-amino-acid polypeptide reads, in one-letter code: Myosin regulatory light chain 12B (171 aa).

Thr-18 is subject to Phosphothreonine; by MLCK and ZIPK/DAPK3. Residue Ser-19 is modified to Phosphoserine; by MLCK and ZIPK/DAPK3. 3 EF-hand domains span residues 28–63 (SQIQ…LGKN), 97–132 (DPED…MGDR), and 133–168 (FTDE…GAKD). Residues Asp-41, Asn-43, Asp-45, and Asp-52 each contribute to the Ca(2+) site.

As to quaternary structure, myosin is a hexamer of 2 heavy chains and 4 light chains: interacts with myosin heavy chain MYO19. Post-translationally, phosphorylation increases the actin-activated myosin ATPase activity and thereby regulates the contractile activity. It is required to generate the driving force in the migration of the cells but not necessary for localization of myosin-2 at the leading edge. Phosphorylation is reduced following epigallocatechin-3-O-gallate treatment.

Its function is as follows. Myosin regulatory subunit that plays an important role in regulation of both smooth muscle and nonmuscle cell contractile activity via its phosphorylation. Phosphorylation triggers actin polymerization in vascular smooth muscle. Implicated in cytokinesis, receptor capping, and cell locomotion. This Bos taurus (Bovine) protein is Myosin regulatory light chain 12B (MYL12B).